The following is a 549-amino-acid chain: uncharacterized protein (549 aa).

A run of 12 helical transmembrane segments spans residues M1–T21, I28–L48, V50–G70, I85–Y105, W106–T126, F165–F185, K187–L207, I222–S242, L278–L298, N310–V330, I361–I381, and V398–I418.

This sequence belongs to the monovalent cation:proton antiporter 1 (CPA1) transporter (TC 2.A.36) family.

The protein localises to the cell inner membrane. This is an uncharacterized protein from Escherichia coli (strain K12).